We begin with the raw amino-acid sequence, 146 residues long: D-aminoacyl-tRNA deacylase (146 aa).

The short motif at 137 to 138 is the Gly-cisPro motif, important for rejection of L-amino acids element; that stretch reads GP.

This sequence belongs to the DTD family. In terms of assembly, homodimer.

The protein resides in the cytoplasm. The catalysed reaction is glycyl-tRNA(Ala) + H2O = tRNA(Ala) + glycine + H(+). It catalyses the reaction a D-aminoacyl-tRNA + H2O = a tRNA + a D-alpha-amino acid + H(+). Functionally, an aminoacyl-tRNA editing enzyme that deacylates mischarged D-aminoacyl-tRNAs. Also deacylates mischarged glycyl-tRNA(Ala), protecting cells against glycine mischarging by AlaRS. Acts via tRNA-based rather than protein-based catalysis; rejects L-amino acids rather than detecting D-amino acids in the active site. By recycling D-aminoacyl-tRNA to D-amino acids and free tRNA molecules, this enzyme counteracts the toxicity associated with the formation of D-aminoacyl-tRNA entities in vivo and helps enforce protein L-homochirality. The polypeptide is D-aminoacyl-tRNA deacylase (Bacillus cereus (strain ATCC 14579 / DSM 31 / CCUG 7414 / JCM 2152 / NBRC 15305 / NCIMB 9373 / NCTC 2599 / NRRL B-3711)).